The chain runs to 189 residues: Thermostable direct hemolysin (189 aa).

The N-terminal stretch at 1–24 (MKYRHLAKKSFLFIFMLAAFKTFA) is a signal peptide. A disulfide bridge links Cys-175 with Cys-185.

The protein belongs to the TDH hemolysin family. As to quaternary structure, homodimer.

Its function is as follows. Bacterial hemolysins are exotoxins that attack blood cell membranes and cause cell rupture by mechanisms not clearly defined. The chain is Thermostable direct hemolysin (tdh) from Grimontia hollisae (Vibrio hollisae).